The chain runs to 157 residues: Ubiquitin-like protein 4A (157 aa).

One can recognise a Ubiquitin-like domain in the interval 1–76 (MQLTVKALQG…LNLVVKPLEK (76 aa)). K48 is covalently cross-linked (Glycyl lysine isopeptide (Lys-Gly) (interchain with G-Cter in ubiquitin)). S90 carries the post-translational modification Phosphoserine. Residues 96 to 138 (WQLISKVLARHFSAADASRVLEQLQRDYERSLSRLTLDDIERL) form a required and sufficient for interaction with BAG6 region.

Component of the BAG6/BAT3 complex, at least composed of BAG6, UBL4A and GET4/TRC35. Interacts with BAG6; the interaction is direct and required for UBL4A protein stability. Interacts with USP13; may be indirect via BAG6. In terms of processing, polyubiquitinated. Ubiquitination by AMFR and deubiquitination by USP13 may regulate the interaction between the BAG6/BAT3 complex and SGTA and therefore may regulate client proteins fate.

It is found in the cytoplasm. It localises to the cytosol. The protein localises to the nucleus. Its function is as follows. As part of a cytosolic protein quality control complex, the BAG6/BAT3 complex, maintains misfolded and hydrophobic patches-containing proteins in a soluble state and participates in their proper delivery to the endoplasmic reticulum or alternatively can promote their sorting to the proteasome where they undergo degradation. The BAG6/BAT3 complex is involved in the post-translational delivery of tail-anchored/type II transmembrane proteins to the endoplasmic reticulum membrane. Recruited to ribosomes, it interacts with the transmembrane region of newly synthesized tail-anchored proteins and together with SGTA and ASNA1 mediates their delivery to the endoplasmic reticulum. Client proteins that cannot be properly delivered to the endoplasmic reticulum are ubiquitinated and sorted to the proteasome. Similarly, the BAG6/BAT3 complex also functions as a sorting platform for proteins of the secretory pathway that are mislocalized to the cytosol either delivering them to the proteasome for degradation or to the endoplasmic reticulum. The BAG6/BAT3 complex also plays a role in the endoplasmic reticulum-associated degradation (ERAD), a quality control mechanism that eliminates unwanted proteins of the endoplasmic reticulum through their retrotranslocation to the cytosol and their targeting to the proteasome. It maintains these retrotranslocated proteins in an unfolded yet soluble state condition in the cytosol to ensure their proper delivery to the proteasome. This is Ubiquitin-like protein 4A from Homo sapiens (Human).